Consider the following 447-residue polypeptide: Protein king tubby (447 aa).

2 stretches are compositionally biased toward low complexity: residues 71-92 (GTGP…YSDS) and 157-169 (NNNN…NSSS). The interval 71–196 (GTGPNVTATS…GGAPDTEGDV (126 aa)) is disordered.

The protein belongs to the TUB family.

It is found in the cytoplasm. It localises to the nucleus. The chain is Protein king tubby from Anopheles gambiae (African malaria mosquito).